A 537-amino-acid chain; its full sequence is Aminopeptidase Y (537 aa).

The signal sequence occupies residues 1–21 (MHFSLKQLAVAAFYATNLGSA). Positions 22-56 (YVIPQFFQEAFQQEEPIENYLPQLNDDDSSAVAAN) are excised as a propeptide. 5 N-linked (GlcNAc...) asparagine glycosylation sites follow: Asn85, Asn96, Asn115, Asn150, and Asn162. Zn(2+) is bound by residues His314 and Asp326. Glu358 acts as the Proton acceptor in catalysis. Residue Glu359 coordinates Zn(2+). A glycan (N-linked (GlcNAc...) asparagine) is linked at Asn371. Asp387 contributes to the Zn(2+) binding site. Asn427 is a glycosylation site (N-linked (GlcNAc...) asparagine). His472 provides a ligand contact to Zn(2+). The N-linked (GlcNAc...) asparagine glycan is linked to Asn480.

This sequence belongs to the peptidase M28 family. M28A subfamily. As to quaternary structure, monomer. Zn(2+) serves as cofactor.

It is found in the vacuole. It carries out the reaction Preferentially, release of N-terminal lysine.. The sequence is that of Aminopeptidase Y (APE3) from Saccharomyces cerevisiae (strain ATCC 204508 / S288c) (Baker's yeast).